A 346-amino-acid chain; its full sequence is Flap endonuclease 1 (346 aa).

The tract at residues 1–102 (MGVTELGKLI…AEIEERRKVK (102 aa)) is N-domain. Mg(2+) is bound by residues Asp-31, Asp-84, Glu-156, Glu-158, Asp-177, Asp-179, and Asp-239. Residues 120 to 261 (DVAKYMKRAV…KALKLVWEFG (142 aa)) form an I-domain region.

The protein belongs to the XPG/RAD2 endonuclease family. FEN1 subfamily. As to quaternary structure, interacts with PCNA. PCNA stimulates the nuclease activity without altering cleavage specificity. Requires Mg(2+) as cofactor.

Structure-specific nuclease with 5'-flap endonuclease and 5'-3' exonuclease activities involved in DNA replication and repair. During DNA replication, cleaves the 5'-overhanging flap structure that is generated by displacement synthesis when DNA polymerase encounters the 5'-end of a downstream Okazaki fragment. Binds the unpaired 3'-DNA end and kinks the DNA to facilitate 5' cleavage specificity. Cleaves one nucleotide into the double-stranded DNA from the junction in flap DNA, leaving a nick for ligation. Also involved in the base excision repair (BER) pathway. Acts as a genome stabilization factor that prevents flaps from equilibrating into structures that lead to duplications and deletions. Also possesses 5'-3' exonuclease activity on nicked or gapped double-stranded DNA. The sequence is that of Flap endonuclease 1 from Pyrobaculum islandicum (strain DSM 4184 / JCM 9189 / GEO3).